The sequence spans 315 residues: ATP synthase gamma chain (315 aa).

This sequence belongs to the ATPase gamma chain family. In terms of assembly, F-type ATPases have 2 components, CF(1) - the catalytic core - and CF(0) - the membrane proton channel. CF(1) has five subunits: alpha(3), beta(3), gamma(1), delta(1), epsilon(1). CF(0) has three main subunits: a, b and c.

It localises to the cellular thylakoid membrane. Produces ATP from ADP in the presence of a proton gradient across the membrane. The gamma chain is believed to be important in regulating ATPase activity and the flow of protons through the CF(0) complex. The polypeptide is ATP synthase gamma chain (Synechococcus sp. (strain PCC 6716)).